The chain runs to 353 residues: Nuclear hormone receptor family member nhr-27 (353 aa).

A DNA-binding region (nuclear receptor) is located at residues 24–102 (VSNCVVCGRL…KGMLDLSRYT (79 aa)). 2 consecutive NR C4-type zinc fingers follow at residues 27-47 (CVVC…CSAC) and 64-85 (CKYS…CKFC). In terms of domain architecture, NR LBD spans 119–351 (ETLFLTMTVS…SQVHQDVIEF (233 aa)). Residues 340–351 (QPSQVHQDVIEF) are AF-2.

Belongs to the nuclear hormone receptor family.

It localises to the nucleus. Functionally, ligand-activated transcription factor. Involved in lifespan extension in a manner dependent upon mitochondrial function. The protein is Nuclear hormone receptor family member nhr-27 of Caenorhabditis elegans.